The chain runs to 400 residues: Phosphoribosylamine--glycine ligase (400 aa).

The ATP-grasp domain occupies 99 to 303; it reads KRFMKKYGIR…FVNAVLEGYR (205 aa). An ATP-binding site is contributed by 125–186; sequence IKKFSPPYVI…DEFLAGNELS (62 aa). Positions 273 and 275 each coordinate Mg(2+).

Belongs to the GARS family. Mg(2+) is required as a cofactor. Mn(2+) serves as cofactor.

The enzyme catalyses 5-phospho-beta-D-ribosylamine + glycine + ATP = N(1)-(5-phospho-beta-D-ribosyl)glycinamide + ADP + phosphate + H(+). Its pathway is purine metabolism; IMP biosynthesis via de novo pathway; N(1)-(5-phospho-D-ribosyl)glycinamide from 5-phospho-alpha-D-ribose 1-diphosphate: step 2/2. The sequence is that of Phosphoribosylamine--glycine ligase from Thermotoga maritima (strain ATCC 43589 / DSM 3109 / JCM 10099 / NBRC 100826 / MSB8).